Here is a 385-residue protein sequence, read N- to C-terminus: Outer membrane porin protein BP0840 (385 aa).

A signal peptide spans 1-20 (MKKTLLAAALLAGFAGAAQA).

This sequence to bacterial outer membrane proteins and porins. Homotrimer.

The protein localises to the cell outer membrane. Functionally, forms anion selective channels. The protein is Outer membrane porin protein BP0840 of Bordetella pertussis (strain Tohama I / ATCC BAA-589 / NCTC 13251).